Here is a 356-residue protein sequence, read N- to C-terminus: Outer spore wall protein LDS2 (356 aa).

Residues 1–92 (MSTRPQPDWY…ISESVGNSDY (92 aa)) are Cytoplasmic-facing. Residues 93-113 (LHLFFLIFGYYLLNLLLIVAF) form a helical membrane-spanning segment. Topologically, residues 114-115 (TS) are extracellular. A helical membrane pass occupies residues 116-136 (ILAWSLLVCIYLPFLGLFALP). Residues 137-213 (LAYMQTILIS…KRFYLVSLPQ (77 aa)) lie on the Cytoplasmic side of the membrane. A helical transmembrane segment spans residues 214–234 (FFIFFFWYIFIAFMFLLLLLV). The Extracellular portion of the chain corresponds to 235–294 (PIVGPITINMLPFSPGMGFYYFEPYFVDVLHLDSRKLSKVYYKGFAKWLLYSISSGLLES). Residues 295-315 (IPILGGLFIGTNAVGASLWIV) form a helical membrane-spanning segment. The Cytoplasmic portion of the chain corresponds to 316 to 356 (KEIKDRDQPAVPPSPPAEPEEPTVGSYAPPIQQSIAHINPP). The interval 322–356 (DQPAVPPSPPAEPEEPTVGSYAPPIQQSIAHINPP) is disordered. Over residues 346–356 (IQQSIAHINPP) the composition is skewed to polar residues.

Belongs to the LDS family.

It localises to the prospore membrane. The protein localises to the lipid droplet. Its subcellular location is the spore wall. In terms of biological role, involved in spore wall assembly. This is Outer spore wall protein LDS2 from Saccharomyces cerevisiae (strain ATCC 204508 / S288c) (Baker's yeast).